The primary structure comprises 548 residues: Probable malate:quinone oxidoreductase (548 aa).

The disordered stretch occupies residues 521-548 (DKPQAADSTPKPQLKPQPVQKEVADIAL). Positions 530–541 (PKPQLKPQPVQK) are enriched in low complexity.

It belongs to the MQO family. FAD serves as cofactor.

It catalyses the reaction (S)-malate + a quinone = a quinol + oxaloacetate. It functions in the pathway carbohydrate metabolism; tricarboxylic acid cycle; oxaloacetate from (S)-malate (quinone route): step 1/1. This chain is Probable malate:quinone oxidoreductase, found in Escherichia coli (strain 55989 / EAEC).